A 201-amino-acid polypeptide reads, in one-letter code: 3-isopropylmalate dehydratase small subunit (201 aa).

It belongs to the LeuD family. LeuD type 1 subfamily. In terms of assembly, heterodimer of LeuC and LeuD.

It catalyses the reaction (2R,3S)-3-isopropylmalate = (2S)-2-isopropylmalate. The protein operates within amino-acid biosynthesis; L-leucine biosynthesis; L-leucine from 3-methyl-2-oxobutanoate: step 2/4. Its function is as follows. Catalyzes the isomerization between 2-isopropylmalate and 3-isopropylmalate, via the formation of 2-isopropylmaleate. This chain is 3-isopropylmalate dehydratase small subunit, found in Shewanella sp. (strain MR-7).